We begin with the raw amino-acid sequence, 100 residues long: Small ribosomal subunit protein uS14c (100 aa).

This sequence belongs to the universal ribosomal protein uS14 family. As to quaternary structure, part of the 30S ribosomal subunit.

The protein resides in the plastid. Its subcellular location is the chloroplast. In terms of biological role, binds 16S rRNA, required for the assembly of 30S particles. The sequence is that of Small ribosomal subunit protein uS14c from Populus alba (White poplar).